A 184-amino-acid polypeptide reads, in one-letter code: NADH-quinone oxidoreductase subunit B (184 aa).

The [4Fe-4S] cluster site is built by Cys-37, Cys-38, Cys-103, and Cys-132.

It belongs to the complex I 20 kDa subunit family. In terms of assembly, NDH-1 is composed of 14 different subunits. Subunits NuoB, C, D, E, F, and G constitute the peripheral sector of the complex. It depends on [4Fe-4S] cluster as a cofactor.

It localises to the cell membrane. The enzyme catalyses a quinone + NADH + 5 H(+)(in) = a quinol + NAD(+) + 4 H(+)(out). In terms of biological role, NDH-1 shuttles electrons from NADH, via FMN and iron-sulfur (Fe-S) centers, to quinones in the respiratory chain. The immediate electron acceptor for the enzyme in this species is believed to be a menaquinone. Couples the redox reaction to proton translocation (for every two electrons transferred, four hydrogen ions are translocated across the cytoplasmic membrane), and thus conserves the redox energy in a proton gradient. The chain is NADH-quinone oxidoreductase subunit B from Nocardia farcinica (strain IFM 10152).